Reading from the N-terminus, the 91-residue chain is UPF0213 protein NMA2126 (91 aa).

The GIY-YIG domain occupies 4 to 83 (SNWSLYLILC…AAQKRKLWEQ (80 aa)).

Belongs to the UPF0213 family.

In Neisseria meningitidis serogroup A / serotype 4A (strain DSM 15465 / Z2491), this protein is UPF0213 protein NMA2126.